We begin with the raw amino-acid sequence, 460 residues long: Ribosomal protein uS12 methylthiotransferase RimO (460 aa).

Residues 18 to 134 (MKIHITSLGC…VTSIVAEVLR (117 aa)) enclose the MTTase N-terminal domain. Positions 27, 63, 97, 171, 175, and 178 each coordinate [4Fe-4S] cluster. Positions 157–387 (STPFHYAYVK…MVLQQEISLS (231 aa)) constitute a Radical SAM core domain. Residues 390-456 (QEWIGKTLEV…HYDLMGEAID (67 aa)) enclose the TRAM domain.

It belongs to the methylthiotransferase family. RimO subfamily. [4Fe-4S] cluster is required as a cofactor.

It is found in the cytoplasm. It carries out the reaction L-aspartate(89)-[ribosomal protein uS12]-hydrogen + (sulfur carrier)-SH + AH2 + 2 S-adenosyl-L-methionine = 3-methylsulfanyl-L-aspartate(89)-[ribosomal protein uS12]-hydrogen + (sulfur carrier)-H + 5'-deoxyadenosine + L-methionine + A + S-adenosyl-L-homocysteine + 2 H(+). Catalyzes the methylthiolation of an aspartic acid residue of ribosomal protein uS12. The chain is Ribosomal protein uS12 methylthiotransferase RimO from Heliobacterium modesticaldum (strain ATCC 51547 / Ice1).